A 578-amino-acid polypeptide reads, in one-letter code: Arginine--tRNA ligase (578 aa).

The 'HIGH' region signature appears at 123–133 (PNLAKEMHVGH).

The protein belongs to the class-I aminoacyl-tRNA synthetase family. Monomer.

The protein localises to the cytoplasm. The catalysed reaction is tRNA(Arg) + L-arginine + ATP = L-arginyl-tRNA(Arg) + AMP + diphosphate. In Hahella chejuensis (strain KCTC 2396), this protein is Arginine--tRNA ligase.